The sequence spans 614 residues: Vitamin B12 transporter BtuB (614 aa).

A signal peptide spans 1-20 (MIKKATLLTAFSVTAFSAWA). The short motif at 26-33 (DTLVVTAN) is the TonB box element. The region spanning 38 to 152 (PRSAVLAPVT…IGGVVNIITT (115 aa)) is the TBDR plug domain. Cyanocob(III)alamin is bound by residues S85, N92, and 110-111 (VS). One can recognise a TBDR beta-barrel domain in the interval 155–614 (NPGTELTAGW…EYTLSGSYTF (460 aa)). The next 3 membrane-spanning stretches (beta stranded) occupy residues 158–165 (TELTAGWG), 169–178 (YQNYDISTQQ), and 184–195 (TRATLIGDYEYT). Residues D199, Q211, D213, and D215 each coordinate Ca(2+). A run of 2 beta stranded transmembrane segments spans residues 217-227 (FLSKTLYGALE) and 232-248 (DRWSGFVRGYGYDNRTD). Ca(2+) is bound by residues Y249 and D250. A251 contacts cyanocob(III)alamin. Ca(2+) is bound at residue D261. 14 consecutive transmembrane segments (beta stranded) span residues 263–277 (RKLYSQSWDAGLHFN), 279–296 (ERIQSQLVSSYSHSKDYN), 309–325 (TLDEMKQYNVQWTNSVV), 328–337 (HGNVGAGVDW), 353–369 (YDQRNTGVYLTGLQQLG), 371–381 (FTLEAAARSDD), 385–400 (FGRHGTWQTSAGWEFI), 403–417 (YRFIASYGTSYKAPN), 434–443 (KSKQWEGAFE), 449–458 (VSWRISGYRN), 473–490 (YYNEGKARIKGIEATANF), 494–509 (PLTHTVSYDYVDARNA), 517–529 (RRSKQMAKYQLDW), and 535–550 (DWGMTYQYLGSRYDSD). Residue T309 coordinates cyanocob(III)alamin. R517 lines the cyanocob(III)alamin pocket. Y551 contributes to the cyanocob(III)alamin binding site. 3 beta stranded membrane passes run 558-572 (TVKMGGVSLWDLTVA), 585-596 (IANLFDKDYETV), and 602-614 (AGREYTLSGSYTF). Positions 597-614 (YGYQTAGREYTLSGSYTF) match the TonB C-terminal box motif.

It belongs to the TonB-dependent receptor family. BtuB (TC 1.B.14.3.1) subfamily.

The protein localises to the cell outer membrane. Functionally, involved in the active translocation of vitamin B12 (cyanocobalamin) across the outer membrane to the periplasmic space. It derives its energy for transport by interacting with the trans-periplasmic membrane protein TonB. This Salmonella typhimurium (strain LT2 / SGSC1412 / ATCC 700720) protein is Vitamin B12 transporter BtuB.